The primary structure comprises 287 residues: Proteasome assembly chaperone 1 (287 aa).

Residues 1–32 (MATFFGEVQSVFSRAVDEDDEEEEGEEEEEDR) are disordered. Over residues 17–32 (DEDDEEEEGEEEEEDR) the composition is skewed to acidic residues.

Belongs to the PSMG1 family. In terms of assembly, forms a heterodimer with psmg2. Post-translationally, degraded by the proteasome upon completion of 20S proteasome maturation.

Its subcellular location is the cytoplasm. The protein resides in the endoplasmic reticulum. Functionally, chaperone protein which promotes assembly of the 20S proteasome as part of a heterodimer with psmg2. The sequence is that of Proteasome assembly chaperone 1 from Xenopus tropicalis (Western clawed frog).